The primary structure comprises 362 residues: MSTNPNPWSPYDSYNDCSQGICNIYCPQWCYLIFPPPPPSFFLDDDSSSSSSSFSPLLIALIGILTSALILVSYYTLISKYCHRHHQTSSSETLNLNHNGEGFFSSTQRISTNGDGLNESMIKSITVYKYKSGDGFVDGSDCSVCLSEFEENESLRLLPKCNHAFHLPCIDTWLKSHSNCPLCRAFVTGVNNPTASVGQNVSVVVANQSNSAHQTGSVSEINLNLAGYESQTGDFDSVVVIEDLEIGSRNSDARSELQLPEERRETKDEDSLPIRRSVSLNSGVVVSIADVLREIEDEEGESGGVGTSQRREEGEDGDGKTIPPTEANQRSGGVSGFFVRSLSTGRFIFSRYDRGRNYRLPL.

The chain crosses the membrane as a helical span at residues 58–78 (LIALIGILTSALILVSYYTLI). The segment at 142 to 184 (CSVCLSEFEENESLRLLPKCNHAFHLPCIDTWLKSHSNCPLCR) adopts an RING-type; atypical zinc-finger fold. 2 disordered regions span residues 252–271 (DARS…DEDS) and 296–333 (EDEE…RSGG). Residues 309–319 (QRREEGEDGDG) are compositionally biased toward basic and acidic residues.

Belongs to the RING-type zinc finger family. ATL subfamily. As to expression, expressed in flowers.

The protein resides in the membrane. The catalysed reaction is S-ubiquitinyl-[E2 ubiquitin-conjugating enzyme]-L-cysteine + [acceptor protein]-L-lysine = [E2 ubiquitin-conjugating enzyme]-L-cysteine + N(6)-ubiquitinyl-[acceptor protein]-L-lysine.. The protein operates within protein modification; protein ubiquitination. The polypeptide is RING-H2 finger protein ATL52 (ATL52) (Arabidopsis thaliana (Mouse-ear cress)).